Here is a 249-residue protein sequence, read N- to C-terminus: MVAFDANEILTPFCEGHREGAILFDCQRMRQVEYGLFVPAWWGERAHPISEGGRGSAWFVEASFGNAVLRQYRRGGMIAMLNRDRYFWCGGHRTRSVLEFRLMRELISRGLPVPTPLAACYVRHGVQYRAAILMERLEGVSSLAMCVRGNSKEIHWEQIGRMISRFHREGLDHADLNAHNILLDQAGQCWLIDFDRGALRIPATKWREHNLARLLRSLLKIRGERSVDAVYRDFERLCRAYDLAWGRGC.

Aspartate 175 is an active-site residue.

The protein belongs to the protein kinase superfamily. KdkA/RfaP family.

It localises to the cell inner membrane. The catalysed reaction is an alpha-Kdo-(2-&gt;6)-lipid IVA + ATP = a 4-O-phospho-alpha-Kdo-(2-&gt;6)-lipid IVA + ADP + H(+). The protein operates within bacterial outer membrane biogenesis; LPS core biosynthesis. Catalyzes the ATP-dependent phosphorylation of the 3-deoxy-D-manno-octulosonic acid (Kdo) residue in Kdo-lipid IV(A) at the 4-OH position. The chain is 3-deoxy-D-manno-octulosonic acid kinase from Xylella fastidiosa (strain M23).